We begin with the raw amino-acid sequence, 258 residues long: Alcohol dehydrogenase 2 (258 aa).

Residue 9–33 (IFVGGLGFIGYEACKQLMAKNMASF) coordinates NAD(+). Substrate is bound at residue Ser-137. Catalysis depends on Tyr-150, which acts as the Proton acceptor.

This sequence belongs to the short-chain dehydrogenases/reductases (SDR) family. As to quaternary structure, homodimer.

The catalysed reaction is a primary alcohol + NAD(+) = an aldehyde + NADH + H(+). It carries out the reaction a secondary alcohol + NAD(+) = a ketone + NADH + H(+). The chain is Alcohol dehydrogenase 2 (ADH2) from Ceratitis cosyra (Mango fruit fly).